Here is a 154-residue protein sequence, read N- to C-terminus: Endoribonuclease YbeY (154 aa).

Residues His-113, His-117, and His-123 each coordinate Zn(2+).

It belongs to the endoribonuclease YbeY family. The cofactor is Zn(2+).

The protein localises to the cytoplasm. Functionally, single strand-specific metallo-endoribonuclease involved in late-stage 70S ribosome quality control and in maturation of the 3' terminus of the 16S rRNA. This Vibrio vulnificus (strain CMCP6) protein is Endoribonuclease YbeY.